Here is a 318-residue protein sequence, read N- to C-terminus: Melanocyte-stimulating hormone receptor (318 aa).

Residues 1–37 (MPMQGAQRKLLGSLNSTPTATSNLGLAANRTGAPCLE) are Extracellular-facing. N29 carries an N-linked (GlcNAc...) asparagine glycan. The helical transmembrane segment at 38–63 (LPIPNGLFLSLGLVSLVENVLVVAAI) threads the bilayer. The Cytoplasmic portion of the chain corresponds to 64–72 (AKNRNLHSS). A helical membrane pass occupies residues 73–93 (MYCFICCLALSDLLVSGSNML). The Extracellular segment spans residues 94–118 (ETAVILLLEAGVLATRASVVQQLHN). Residues 119 to 140 (TIDVLTCSSMLCSLCFLGAIAV) traverse the membrane as a helical segment. Over 141–163 (DRYISIFYALRYHSIMTLPRAQR) the chain is Cytoplasmic. The helical transmembrane segment at 164 to 183 (AVAAIWVASVLSSTLFITYY) threads the bilayer. Topologically, residues 184–191 (DHAAVLLC) are extracellular. A helical transmembrane segment spans residues 192 to 211 (LMVFFLAMLVLMAVLYVHML). At 212–240 (ARARQHAQGIIRLHKRQPPAHKGFGLRGA) the chain is on the cytoplasmic side. Residues 241 to 266 (ATLTILLGIFFLCWGPFFLCLTLVVF) form a helical membrane-spanning segment. Residues 267-279 (CPQHLTCNCIFKN) lie on the Extracellular side of the membrane. A helical membrane pass occupies residues 280–300 (FKVFLTLIICNTIIDPLIYAF). At 301-317 (RSQELRRMLKEVLGRGR) the chain is on the cytoplasmic side.

Belongs to the G-protein coupled receptor 1 family. In terms of assembly, interacts with MGRN1, but does not undergo MGRN1-mediated ubiquitination; this interaction competes with GNAS-binding and thus inhibits agonist-induced cAMP production. Interacts with OPN3; the interaction results in a decrease in MC1R-mediated cAMP signaling and ultimately a decrease in melanin production in melanocytes.

It localises to the cell membrane. Receptor for MSH (alpha, beta and gamma) and ACTH. The activity of this receptor is mediated by G proteins which activate adenylate cyclase. Mediates melanogenesis, the production of eumelanin (black/brown) and phaeomelanin (red/yellow), via regulation of cAMP signaling in melanocytes. The chain is Melanocyte-stimulating hormone receptor (MC1R) from Leontopithecus rosalia (Golden lion tamarin).